The following is an 81-amino-acid chain: Cytotoxin I-like T-15 (81 aa).

A signal peptide spans 1 to 21 (MKTLLLTLVVVTIVCLDLGYT). 4 disulfides stabilise this stretch: Cys24–Cys42, Cys35–Cys59, Cys63–Cys74, and Cys75–Cys80.

This sequence belongs to the three-finger toxin family. Short-chain subfamily. Type IA cytotoxin sub-subfamily. As to quaternary structure, monomer in solution; Homodimer and oligomer in the presence of negatively charged lipids forming a pore with a size ranging between 20 and 30 Angstroms. As to expression, expressed by the venom gland.

It localises to the secreted. The protein resides in the target cell membrane. Functionally, shows cytolytic activity on many different cells by forming pore in lipid membranes. In vivo, increases heart rate or kills the animal by cardiac arrest. In addition, it binds to heparin with high affinity, interacts with Kv channel-interacting protein 1 (KCNIP1) in a calcium-independent manner, and binds to integrin alpha-V/beta-3 (ITGAV/ITGB3) with moderate affinity. This is Cytotoxin I-like T-15 from Naja atra (Chinese cobra).